The chain runs to 256 residues: Pimeloyl-[acyl-carrier protein] methyl ester esterase (256 aa).

Positions 15 to 242 (HLVLLHGWGL…AAHAPFISHP (228 aa)) constitute an AB hydrolase-1 domain. Residues tryptophan 22, 82-83 (SL), and 143-147 (FLALQ) contribute to the substrate site. Serine 82 functions as the Nucleophile in the catalytic mechanism. Residues aspartate 207 and histidine 235 contribute to the active site. Histidine 235 is a binding site for substrate.

The protein belongs to the AB hydrolase superfamily. Carboxylesterase BioH family. Monomer.

The protein localises to the cytoplasm. It catalyses the reaction 6-carboxyhexanoyl-[ACP] methyl ester + H2O = 6-carboxyhexanoyl-[ACP] + methanol + H(+). The protein operates within cofactor biosynthesis; biotin biosynthesis. The physiological role of BioH is to remove the methyl group introduced by BioC when the pimeloyl moiety is complete. It allows to synthesize pimeloyl-ACP via the fatty acid synthetic pathway through the hydrolysis of the ester bonds of pimeloyl-ACP esters. The protein is Pimeloyl-[acyl-carrier protein] methyl ester esterase of Escherichia coli (strain SMS-3-5 / SECEC).